We begin with the raw amino-acid sequence, 351 residues long: Putative F-box protein At5g52610 (351 aa).

The F-box domain occupies 1–41 (MISEDLLVEILLRLPVKPLARCLCVCKLWATIIRSRYFINL).

The chain is Putative F-box protein At5g52610 from Arabidopsis thaliana (Mouse-ear cress).